A 1115-amino-acid polypeptide reads, in one-letter code: Neural cell adhesion molecule 1 (1115 aa).

Residues 1–19 form the signal peptide; the sequence is MLRTKDLIWTLFFLGTAVS. Ig-like C2-type domains follow at residues 20–111, 116–205, 212–302, 309–402, and 407–492; these read LQVD…ATVN, QKLM…KDIQ, PTVQ…ASIH, PKIT…MYLE, and PKLQ…ESLE. Residues 20–711 lie on the Extracellular side of the membrane; sequence LQVDIVPSQG…NGSPTAGLST (692 aa). 2 disulfides stabilise this stretch: Cys41/Cys96 and Cys139/Cys189. Heparin contacts are provided by residues 152 to 156 and 161 to 165; these read KHKGR and KKDVR. Asn222 is a glycosylation site (N-linked (GlcNAc...) asparagine; partial). Cysteines 235 and 288 form a disulfide. N-linked (GlcNAc...) asparagine glycosylation is found at Asn316, Asn348, Asn424, Asn450, and Asn479. An intrachain disulfide couples Cys330 to Cys386. An intrachain disulfide couples Cys427 to Cys480. 2 Fibronectin type-III domains span residues 500 to 599 and 601 to 696; these read TPSS…TQPV and EPSA…SAQP. Thr706 is lipidated: GPI-anchor amidated serine. Residues 712 to 729 form a helical membrane-spanning segment; it reads GAIVGILIVIFVLLLVVM. Residues 730–1115 are Cytoplasmic-facing; it reads DITCYFLNKC…TQTKENESKA (386 aa). Disordered stretches follow at residues 756-809, 839-912, and 924-1115; these read GAKG…TEPE, FATA…SASN, and VLSP…ESKA. The span at 758 to 799 shows a compositional bias: basic and acidic residues; that stretch reads KGKDMEEGKAAFSKDESKEPIVEVRTEEERTPNHDGGKHTEP. Phosphoserine is present on residues Ser770 and Ser774. 3 stretches are compositionally biased toward low complexity: residues 800-809, 845-856, and 876-896; these read NETTPLTEPE, SPTSETTTLTSS, and TPSK…KVAP. Residues Ser887 and Ser890 each carry the phosphoserine modification. Composition is skewed to polar residues over residues 902 to 912 and 926 to 935; these read DTPTSAPSASN and SPSTPASAGE. At Ser926 the chain carries Phosphoserine. Thr929 is modified (phosphothreonine). Low complexity-rich tracts occupy residues 936–974 and 999–1012; these read TSKA…PQAK and AATA…KAAT. Phosphoserine is present on residues Ser946 and Ser958. At Thr1001 the chain carries Phosphothreonine. Phosphoserine is present on Ser1005. Composition is skewed to basic and acidic residues over residues 1019 to 1037 and 1074 to 1091; these read EDLK…DLAK and KTEK…ESEA. Thr1030 carries the phosphothreonine modification.

As to quaternary structure, interacts with MDK. Found in a complex with SLC39A6, SLC39A10 and with NCAM1; this complex controls NCAM1 phosphorylation and integration into focal adhesion complexes during epithelial-tomesenchymal transition. Interacts with synaptic plasticity regulator PANTS. Post-translationally, polysialylated by ST8SIA2 and ST8SIA4. Polysialylation modulates cell interactions by confering both attractive and repulsive properties that are highly regulated by ST8SIA2 and ST8SIA4. Polysialylation is formed on a-2,3-linked sialic acid of core glycans.

It is found in the cell membrane. Its function is as follows. This protein is a cell adhesion molecule involved in neuron-neuron adhesion, neurite fasciculation, outgrowth of neurites, etc. The protein is Neural cell adhesion molecule 1 of Mus musculus (Mouse).